Here is a 246-residue protein sequence, read N- to C-terminus: DNA repair protein RecO (246 aa).

Belongs to the RecO family.

Its function is as follows. Involved in DNA repair and RecF pathway recombination. The sequence is that of DNA repair protein RecO from Bifidobacterium adolescentis (strain ATCC 15703 / DSM 20083 / NCTC 11814 / E194a).